The primary structure comprises 181 residues: ATP synthase subunit delta (181 aa).

Belongs to the ATPase delta chain family. F-type ATPases have 2 components, F(1) - the catalytic core - and F(0) - the membrane proton channel. F(1) has five subunits: alpha(3), beta(3), gamma(1), delta(1), epsilon(1). F(0) has three main subunits: a(1), b(2) and c(10-14). The alpha and beta chains form an alternating ring which encloses part of the gamma chain. F(1) is attached to F(0) by a central stalk formed by the gamma and epsilon chains, while a peripheral stalk is formed by the delta and b chains.

The protein localises to the cell inner membrane. Functionally, f(1)F(0) ATP synthase produces ATP from ADP in the presence of a proton or sodium gradient. F-type ATPases consist of two structural domains, F(1) containing the extramembraneous catalytic core and F(0) containing the membrane proton channel, linked together by a central stalk and a peripheral stalk. During catalysis, ATP synthesis in the catalytic domain of F(1) is coupled via a rotary mechanism of the central stalk subunits to proton translocation. This protein is part of the stalk that links CF(0) to CF(1). It either transmits conformational changes from CF(0) to CF(1) or is implicated in proton conduction. The polypeptide is ATP synthase subunit delta (Fervidobacterium nodosum (strain ATCC 35602 / DSM 5306 / Rt17-B1)).